A 343-amino-acid polypeptide reads, in one-letter code: KRR1 small subunit processome component homolog (343 aa).

A KH domain is found at 125 to 193; that stretch reads DIIKIGNLVH…VRDIVVETMN (69 aa). Residues 232–245 are compositionally biased toward basic residues; that stretch reads NISKRKQPKVKKAK. Residues 232-343 form a disordered region; it reads NISKRKQPKV…KLLKANKKKV (112 aa). Residues 270–302 adopt a coiled-coil conformation; it reads FLNKEQKQAKRQQERSAKQADAAKRQDERRNKD. Basic and acidic residues predominate over residues 271 to 302; that stretch reads LNKEQKQAKRQQERSAKQADAAKRQDERRNKD. Over residues 331–343 the composition is skewed to basic residues; the sequence is LKAKLLKANKKKV.

This sequence belongs to the KRR1 family. As to quaternary structure, monomer. Component of the ribosomal small subunit (SSU) processome.

The protein localises to the nucleus. Its subcellular location is the nucleolus. Functionally, required for 40S ribosome biogenesis. Involved in nucleolar processing of pre-18S ribosomal RNA and ribosome assembly. Binds to RNA. Required for female germline development, cell viability during eye development and for survival of dividing cells and epithelial cells during early wing disk development. In Drosophila ananassae (Fruit fly), this protein is KRR1 small subunit processome component homolog.